The following is a 226-amino-acid chain: Sugar transporter SWEET1 (226 aa).

7 helical membrane-spanning segments follow: residues 8 to 28, 42 to 62, 67 to 87, 94 to 114, 127 to 147, 161 to 181, and 185 to 205; these read LLSTTAVISTVFQFLSGAMIC, GVPFICGFLSCSFWLRYGVLT, IVLVNIIGSTLFLIYTLIYYV, AFVRQFAFVLAVLIAVVVVYT, ITGIFCCIVTVCFFAAPLATL, LPLIATSFLVSLQWLIYGILI, and FIQIPNFLGCLLSMLQLSLFV. The 85-residue stretch at 8–92 folds into the MtN3/slv 1 domain; the sequence is LLSTTAVIST…LIYYVFTVNK (85 aa). Residues 129–210 form the MtN3/slv 2 domain; the sequence is GIFCCIVTVC…LSLFVVYPPR (82 aa).

This sequence belongs to the SWEET sugar transporter family.

The protein localises to the golgi apparatus membrane. It localises to the cell membrane. Mediates both low-affinity uptake and efflux of sugar across the membrane. The protein is Sugar transporter SWEET1 (slv) of Drosophila pseudoobscura pseudoobscura (Fruit fly).